A 161-amino-acid polypeptide reads, in one-letter code: Protein-export protein SecB (161 aa).

It belongs to the SecB family. Homotetramer, a dimer of dimers. One homotetramer interacts with 1 SecA dimer.

It is found in the cytoplasm. Its function is as follows. One of the proteins required for the normal export of preproteins out of the cell cytoplasm. It is a molecular chaperone that binds to a subset of precursor proteins, maintaining them in a translocation-competent state. It also specifically binds to its receptor SecA. This is Protein-export protein SecB from Pseudomonas putida (strain ATCC 700007 / DSM 6899 / JCM 31910 / BCRC 17059 / LMG 24140 / F1).